Reading from the N-terminus, the 462-residue chain is Mitochondrial-processing peptidase subunit beta (462 aa).

The N-terminal 20 residues, 1–20, are a transit peptide targeting the mitochondrion; that stretch reads MFSRTASKFRNTRRLLSTIS. His-70 lines the Zn(2+) pocket. Glu-73 acts as the Proton acceptor in catalysis. Positions 74 and 150 each coordinate Zn(2+). Phosphoserine is present on Ser-243.

This sequence belongs to the peptidase M16 family. As to quaternary structure, heterodimer of MAS2 (alpha) and MAS1 (beta) subunits, forming the mitochondrial processing protease (MPP) in which MAS2 is involved in substrate recognition and binding and MAS1 is the catalytic subunit. Zn(2+) serves as cofactor.

It is found in the mitochondrion matrix. The enzyme catalyses Release of N-terminal transit peptides from precursor proteins imported into the mitochondrion, typically with Arg in position P2.. With respect to regulation, binding to MAS2 is required for catalytic activity. Inhibited by high levels (&gt; 1uM) of zinc. Inhibited by metal chelators ethylenediaminetetraacetic acid (EDTA) and O-phenanthroline. In terms of biological role, catalytic subunit of the essential mitochondrial processing protease (MPP), which cleaves the mitochondrial sequence off newly imported precursors proteins. Preferentially, cleaves after an arginine at position P2. The protein is Mitochondrial-processing peptidase subunit beta of Saccharomyces cerevisiae (strain ATCC 204508 / S288c) (Baker's yeast).